A 268-amino-acid polypeptide reads, in one-letter code: Ribosomal RNA small subunit methyltransferase A (268 aa).

6 residues coordinate S-adenosyl-L-methionine: Asn-16, Leu-18, Gly-43, Glu-64, Asp-89, and Asn-110.

It belongs to the class I-like SAM-binding methyltransferase superfamily. rRNA adenine N(6)-methyltransferase family. RsmA subfamily.

The protein resides in the cytoplasm. The enzyme catalyses adenosine(1518)/adenosine(1519) in 16S rRNA + 4 S-adenosyl-L-methionine = N(6)-dimethyladenosine(1518)/N(6)-dimethyladenosine(1519) in 16S rRNA + 4 S-adenosyl-L-homocysteine + 4 H(+). Its function is as follows. Specifically dimethylates two adjacent adenosines (A1518 and A1519) in the loop of a conserved hairpin near the 3'-end of 16S rRNA in the 30S particle. May play a critical role in biogenesis of 30S subunits. The sequence is that of Ribosomal RNA small subunit methyltransferase A from Pseudomonas aeruginosa (strain ATCC 15692 / DSM 22644 / CIP 104116 / JCM 14847 / LMG 12228 / 1C / PRS 101 / PAO1).